We begin with the raw amino-acid sequence, 414 residues long: Leucine-rich repeat protein 1 (414 aa).

LRR repeat units lie at residues Ser-155–Leu-176, Ser-178–Leu-199, His-201–Ser-222, Ser-227–Leu-248, Glu-250–Leu-271, Asn-273–Leu-294, and Ser-295–Lys-316.

In terms of assembly, component of the probable ECS(LRR1) E3 ubiquitin-protein ligase complex which contains CUL2, RBX1, Elongin BC complex and LRR1. Interacts with CUL2, RBX1, ELOB and ELOC. As to expression, ubiquitous. Maximal expression was seen in the heart and skeletal muscle and minimal expression seen in the kidney.

The protein localises to the nucleus. It functions in the pathway protein modification; protein ubiquitination. In terms of biological role, substrate recognition subunit of an ECS (Elongin BC-CUL2/5-SOCS-box protein) E3 ubiquitin-protein ligase complex which mediates the ubiquitination and subsequent proteasomal degradation of target proteins. ECS(LRR1) ubiquitinates MCM7 and promotes CMG replisome disassembly by VCP and chromatin extraction during S-phase. May negatively regulate the 4-1BB-mediated signaling cascades which result in the activation of NK-kappaB and JNK1. This Homo sapiens (Human) protein is Leucine-rich repeat protein 1.